Reading from the N-terminus, the 227-residue chain is Cytochrome c oxidase subunit 2 (227 aa).

At 1-14 (MAYPMQLGFQDATS) the chain is on the mitochondrial intermembrane side. Residues 15 to 45 (PIMEELLHFHDHTLMIVFLISSLVLYIISLM) traverse the membrane as a helical segment. At 46–59 (LTTKLTHTSTMDAQ) the chain is on the mitochondrial matrix side. The chain crosses the membrane as a helical span at residues 60-87 (EVETVWTILPAIILIMIALPSLRILYMM). At 88–227 (DEINNPSLTV…YFEKWSASML (140 aa)) the chain is on the mitochondrial intermembrane side. Positions 161, 196, 198, 200, 204, and 207 each coordinate Cu cation. E198 lines the Mg(2+) pocket. A Phosphotyrosine modification is found at Y218.

The protein belongs to the cytochrome c oxidase subunit 2 family. As to quaternary structure, component of the cytochrome c oxidase (complex IV, CIV), a multisubunit enzyme composed of 14 subunits. The complex is composed of a catalytic core of 3 subunits MT-CO1, MT-CO2 and MT-CO3, encoded in the mitochondrial DNA, and 11 supernumerary subunits COX4I, COX5A, COX5B, COX6A, COX6B, COX6C, COX7A, COX7B, COX7C, COX8 and NDUFA4, which are encoded in the nuclear genome. The complex exists as a monomer or a dimer and forms supercomplexes (SCs) in the inner mitochondrial membrane with NADH-ubiquinone oxidoreductase (complex I, CI) and ubiquinol-cytochrome c oxidoreductase (cytochrome b-c1 complex, complex III, CIII), resulting in different assemblies (supercomplex SCI(1)III(2)IV(1) and megacomplex MCI(2)III(2)IV(2)). Found in a complex with TMEM177, COA6, COX18, COX20, SCO1 and SCO2. Interacts with TMEM177 in a COX20-dependent manner. Interacts with COX20. Interacts with COX16. Requires Cu cation as cofactor.

It localises to the mitochondrion inner membrane. It catalyses the reaction 4 Fe(II)-[cytochrome c] + O2 + 8 H(+)(in) = 4 Fe(III)-[cytochrome c] + 2 H2O + 4 H(+)(out). Functionally, component of the cytochrome c oxidase, the last enzyme in the mitochondrial electron transport chain which drives oxidative phosphorylation. The respiratory chain contains 3 multisubunit complexes succinate dehydrogenase (complex II, CII), ubiquinol-cytochrome c oxidoreductase (cytochrome b-c1 complex, complex III, CIII) and cytochrome c oxidase (complex IV, CIV), that cooperate to transfer electrons derived from NADH and succinate to molecular oxygen, creating an electrochemical gradient over the inner membrane that drives transmembrane transport and the ATP synthase. Cytochrome c oxidase is the component of the respiratory chain that catalyzes the reduction of oxygen to water. Electrons originating from reduced cytochrome c in the intermembrane space (IMS) are transferred via the dinuclear copper A center (CU(A)) of subunit 2 and heme A of subunit 1 to the active site in subunit 1, a binuclear center (BNC) formed by heme A3 and copper B (CU(B)). The BNC reduces molecular oxygen to 2 water molecules using 4 electrons from cytochrome c in the IMS and 4 protons from the mitochondrial matrix. The polypeptide is Cytochrome c oxidase subunit 2 (MT-CO2) (Capra hircus (Goat)).